The chain runs to 202 residues: NADH-quinone oxidoreductase subunit B 2 (202 aa).

Positions 38, 39, 104, and 133 each coordinate [4Fe-4S] cluster.

It belongs to the complex I 20 kDa subunit family. NDH-1 is composed of 14 different subunits. Subunits NuoB, C, D, E, F, and G constitute the peripheral sector of the complex. The cofactor is [4Fe-4S] cluster.

The protein localises to the cell inner membrane. It carries out the reaction a quinone + NADH + 5 H(+)(in) = a quinol + NAD(+) + 4 H(+)(out). In terms of biological role, NDH-1 shuttles electrons from NADH, via FMN and iron-sulfur (Fe-S) centers, to quinones in the respiratory chain. The immediate electron acceptor for the enzyme in this species is believed to be ubiquinone. Couples the redox reaction to proton translocation (for every two electrons transferred, four hydrogen ions are translocated across the cytoplasmic membrane), and thus conserves the redox energy in a proton gradient. This is NADH-quinone oxidoreductase subunit B 2 from Koribacter versatilis (strain Ellin345).